An 861-amino-acid polypeptide reads, in one-letter code: Alpha-actinin A (861 aa).

The tract at residues 1–239 is actin-binding; the sequence is MSEEPTPVSG…VMTYVAQYYH (239 aa). Calponin-homology (CH) domains follow at residues 22–127 and 136–242; these read ITQK…LRFA and LSAK…HHFS. Spectrin repeat units follow at residues 240–365, 366–480, 481–601, and 602–714; these read HFSA…ALEK, AEQE…TGVK, SSAE…EERK, and VQLA…EQVV. 2 EF-hand domains span residues 729–764 and 765–800; these read EELSEFKACFSHFDKDNDNKLNRLEFSSCLKSIGDE and LTEEQLNQVISKIDTDGNGTISFEEFIDYMVSSRKG. D742, D744, D746, K748, E753, D778, D780, N782, T784, and E789 together coordinate Ca(2+).

Belongs to the alpha-actinin family. In terms of assembly, homodimer; antiparallel.

The protein resides in the cytoplasm. It is found in the cell cortex. It localises to the contractile vacuole. Its subcellular location is the cytoplasmic vesicle. The protein localises to the phagosome. F-actin cross-linking protein which is thought to anchor actin to a variety of intracellular structures. This is a bundling protein. Increases the actin-stimulated ATPase activity of myosin. Involved in vegetative cell growth, phagocytosis, motility and development, probably through stabilization of the actin network in the cortical cytoskeleton. In Dictyostelium discoideum (Social amoeba), this protein is Alpha-actinin A (abpA).